The primary structure comprises 199 residues: Protein CPL1 (199 aa).

The signal sequence occupies residues M1–A30. Residues G34–S58 form a disordered region. An N-linked (GlcNAc...) asparagine glycan is attached at N148.

It is found in the secreted. Its function is as follows. Virulence factor which promotes fungal virulence by enhancing type 2 inflammation in the mouse host. Likely binds mouse Tlr4 independently of Ly96/Md2 and activates Tlr4 signaling to drive Stat3 phosphorylation in interstitial macrophages, which promotes the initial induction of Arg1/arginase-1 and increases macrophage sensitivity to Il4 signaling. This Cryptococcus neoformans var. grubii serotype A (strain H99 / ATCC 208821 / CBS 10515 / FGSC 9487) (Filobasidiella neoformans var. grubii) protein is Protein CPL1.